A 483-amino-acid polypeptide reads, in one-letter code: Alginate biosynthesis protein AlgA (483 aa).

The protein belongs to the mannose-6-phosphate isomerase type 2 family. Monomer. Requires Co(2+) as cofactor.

The catalysed reaction is D-mannose 6-phosphate = D-fructose 6-phosphate. It catalyses the reaction alpha-D-mannose 1-phosphate + GTP + H(+) = GDP-alpha-D-mannose + diphosphate. Its pathway is nucleotide-sugar biosynthesis; GDP-alpha-D-mannose biosynthesis; GDP-alpha-D-mannose from alpha-D-mannose 1-phosphate (GTP route): step 1/1. The protein operates within nucleotide-sugar biosynthesis; GDP-alpha-D-mannose biosynthesis; alpha-D-mannose 1-phosphate from D-fructose 6-phosphate: step 1/2. Its function is as follows. Produces a precursor for alginate polymerization. The alginate layer provides a protective barrier against host immune defenses and antibiotics. The polypeptide is Alginate biosynthesis protein AlgA (algA) (Pseudomonas fluorescens).